Reading from the N-terminus, the 156-residue chain is Beta-defensin 125 (156 aa).

An N-terminal signal peptide occupies residues 1–20; that stretch reads MNILMLTFIICGLLTRVTKG. 3 disulfides stabilise this stretch: cysteine 27/cysteine 55, cysteine 35/cysteine 49, and cysteine 39/cysteine 56. A propeptide spanning residues 68-156 is cleaved from the precursor; that stretch reads PAFPVIHLED…PPSQTALTHN (89 aa). Positions 108–156 are disordered; it reads GETMTPETNTPETTMPPSEATTPETTMPPSETATSETMPPPSQTALTHN. Over residues 109-144 the composition is skewed to low complexity; the sequence is ETMTPETNTPETTMPPSEATTPETTMPPSETATSET.

The protein belongs to the beta-defensin family.

It localises to the secreted. In terms of biological role, has antibacterial activity. The polypeptide is Beta-defensin 125 (DEFB125) (Homo sapiens (Human)).